Reading from the N-terminus, the 285-residue chain is Probable xyloglucan endotransglucosylase/hydrolase protein 12 (285 aa).

Residues 1 to 25 form the signal peptide; sequence MAAFATKQSPLLLASLLILIGVATG. In terms of domain architecture, GH16 spans 26–215; it reads SFYDSFDITW…WTNAPFSASY (190 aa). The active-site Nucleophile is E101. The active-site Proton donor is the E105. Residue E105 participates in xyloglucan binding. N109 carries an N-linked (GlcNAc...) asparagine glycan. Residues 118-120, 128-130, 194-195, and G199 contribute to the xyloglucan site; these read HTN, NRE, and DW. Intrachain disulfides connect C224–C235 and C268–C282. Residue R273 coordinates xyloglucan.

The protein belongs to the glycosyl hydrolase 16 family. XTH group 2 subfamily. Post-translationally, contains at least one intrachain disulfide bond essential for its enzymatic activity. In terms of tissue distribution, root specific.

The protein resides in the secreted. The protein localises to the cell wall. It is found in the extracellular space. Its subcellular location is the apoplast. The catalysed reaction is breaks a beta-(1-&gt;4) bond in the backbone of a xyloglucan and transfers the xyloglucanyl segment on to O-4 of the non-reducing terminal glucose residue of an acceptor, which can be a xyloglucan or an oligosaccharide of xyloglucan.. Catalyzes xyloglucan endohydrolysis (XEH) and/or endotransglycosylation (XET). Cleaves and religates xyloglucan polymers, an essential constituent of the primary cell wall, and thereby participates in cell wall construction of growing tissues. This chain is Probable xyloglucan endotransglucosylase/hydrolase protein 12 (XTH12), found in Arabidopsis thaliana (Mouse-ear cress).